The primary structure comprises 788 residues: Probable phosphoketolase 1 (788 aa).

It belongs to the XFP family. Requires thiamine diphosphate as cofactor.

The protein is Probable phosphoketolase 1 of Lactiplantibacillus plantarum (strain ATCC BAA-793 / NCIMB 8826 / WCFS1) (Lactobacillus plantarum).